Consider the following 151-residue polypeptide: MTALYIDADACPVKSEAERVATRHRVKMYIVSNGGLRPSQNPLVETVIVPDGPDVADMWIADRCGTGDVVVTGDIPLAAKCIEAGALVLKHNGEALTSANIGNVLASRDLMADLRAADPFRQGGGKSFGKADRSRFLDGLERTLRKAATLG.

This sequence belongs to the UPF0178 family.

This Roseobacter denitrificans (strain ATCC 33942 / OCh 114) (Erythrobacter sp. (strain OCh 114)) protein is UPF0178 protein RD1_0321.